Consider the following 1058-residue polypeptide: Ubiquitin-like modifier-activating enzyme 1 Y (1058 aa).

Residues 1–22 (MSSSVLSKKRKVSGPDSSLDSS) form a disordered region. ATP is bound by residues Ala-477, Asp-503, Arg-514, Lys-527, and 575–576 (DN). Cys-631 functions as the Glycyl thioester intermediate in the catalytic mechanism.

This sequence belongs to the ubiquitin-activating E1 family. Monomer. In terms of tissue distribution, expressed in testis in A spermatogonia and spermatids but not (or at very low levels) in pachytene spermatocytes. Also expressed in Y-bearing ovaries and at very low levels in adrenal gland.

The enzyme catalyses ATP + ubiquitin + [E1 ubiquitin-activating enzyme]-L-cysteine = AMP + diphosphate + S-ubiquitinyl-[E1 ubiquitin-activating enzyme]-L-cysteine.. It functions in the pathway protein modification; protein ubiquitination. In terms of biological role, activates ubiquitin by first adenylating its C-terminal glycine residue with ATP, and thereafter linking this residue to the side chain of a cysteine residue in E1, yielding a ubiquitin-E1 thioester and free AMP. The Y chromosome form could be involved in the survival and proliferation of differentiating spermatogonia. This chain is Ubiquitin-like modifier-activating enzyme 1 Y (Uba1y), found in Mus musculus (Mouse).